A 122-amino-acid polypeptide reads, in one-letter code: Probable transcription factor PqrA (122 aa).

Residues 7–107 (NDILKWLETQ…NTTPAKFREN (101 aa)) enclose the HTH araC/xylS-type domain. 2 consecutive DNA-binding regions (H-T-H motif) follow at residues 26 to 47 (DTIA…KDFK) and 74 to 97 (ILDI…KKHF).

Upon expression in E.coli strain KY2563 confers resistance to antibiotics ofloxacin, ciprofloxacin, tetracycline, chloramphenicol, and ceftazidime (increases minimal inhibitory concentration by 8-32 times); also decreases expression of OmpF. The protein is Probable transcription factor PqrA of Proteus vulgaris.